A 245-amino-acid chain; its full sequence is Carboxymethylenebutenolidase homolog (245 aa).

Ala-2 carries the post-translational modification N-acetylalanine. The residue at position 36 (Lys-36) is an N6-acetyllysine. Catalysis depends on residues Cys-132, Asp-179, and His-212. Ser-223 carries the phosphoserine modification.

The protein belongs to the dienelactone hydrolase family.

It localises to the cytoplasm. The protein resides in the cytosol. In terms of biological role, cysteine hydrolase. The protein is Carboxymethylenebutenolidase homolog (CMBL) of Pongo abelii (Sumatran orangutan).